The sequence spans 324 residues: Serine carboxypeptidase II-1 (324 aa).

N10 carries an N-linked (GlcNAc...) asparagine glycan. S41 is a catalytic residue. Intrachain disulfides connect C109/C121 and C145/C170. A propeptide spans 150 to 162 (LHRRRLIKGRRPW) (linker peptide). An N-linked (GlcNAc...) asparagine glycan is attached at N191. Residues D239 and H291 contribute to the active site.

The protein belongs to the peptidase S10 family. In terms of assembly, carboxypeptidase II is a dimer, where each monomer is composed of two chains linked by a disulfide bond. Post-translationally, the linker peptide is endoproteolytically excised during enzyme maturation.

The catalysed reaction is Preferential release of a C-terminal arginine or lysine residue.. This chain is Serine carboxypeptidase II-1 (CXP;2-1), found in Hordeum vulgare (Barley).